Here is a 92-residue protein sequence, read N- to C-terminus: Acylphosphatase (92 aa).

An Acylphosphatase-like domain is found at threonine 5–proline 90. Catalysis depends on residues arginine 20 and asparagine 38.

This sequence belongs to the acylphosphatase family.

It catalyses the reaction an acyl phosphate + H2O = a carboxylate + phosphate + H(+). The sequence is that of Acylphosphatase (acyP) from Cupriavidus necator (strain ATCC 17699 / DSM 428 / KCTC 22496 / NCIMB 10442 / H16 / Stanier 337) (Ralstonia eutropha).